The primary structure comprises 291 residues: Ribosomal RNA small subunit methyltransferase A (291 aa).

S-adenosyl-L-methionine-binding residues include histidine 37, leucine 39, glycine 64, glutamate 85, aspartate 110, and asparagine 131.

The protein belongs to the class I-like SAM-binding methyltransferase superfamily. rRNA adenine N(6)-methyltransferase family. RsmA subfamily.

The protein localises to the cytoplasm. It catalyses the reaction adenosine(1518)/adenosine(1519) in 16S rRNA + 4 S-adenosyl-L-methionine = N(6)-dimethyladenosine(1518)/N(6)-dimethyladenosine(1519) in 16S rRNA + 4 S-adenosyl-L-homocysteine + 4 H(+). Specifically dimethylates two adjacent adenosines (A1518 and A1519) in the loop of a conserved hairpin near the 3'-end of 16S rRNA in the 30S particle. May play a critical role in biogenesis of 30S subunits. This is Ribosomal RNA small subunit methyltransferase A from Dehalococcoides mccartyi (strain ATCC BAA-2266 / KCTC 15142 / 195) (Dehalococcoides ethenogenes (strain 195)).